A 415-amino-acid chain; its full sequence is Isocitrate dehydrogenase [NADP] (415 aa).

NADP(+) contacts are provided by residues 77 to 79 (TIT) and Arg-84. Thr-79 contacts substrate. Substrate contacts are provided by residues 96 to 102 (SPNGTIR), Arg-111, and Arg-134. Mn(2+) is bound at residue Asp-254. Lys-262 provides a ligand contact to NADP(+). Asp-277 is a binding site for Mn(2+). NADP(+) contacts are provided by residues 312-317 (GTVTRH) and Asn-330.

The protein belongs to the isocitrate and isopropylmalate dehydrogenases family. In terms of assembly, heterodimer. Requires Mg(2+) as cofactor. The cofactor is Mn(2+).

The protein localises to the cytoplasm. It carries out the reaction D-threo-isocitrate + NADP(+) = 2-oxoglutarate + CO2 + NADPH. Functionally, may supply 2-oxoglutarate for amino acid biosynthesis and ammonia assimilation via the glutamine synthetase/glutamate synthase (GS/GOGAT) pathway. This chain is Isocitrate dehydrogenase [NADP], found in Nicotiana tabacum (Common tobacco).